Reading from the N-terminus, the 180-residue chain is MSRIGRLPIEIPKGVEVKVTPDNVVTVKGSKGTLEKKFPPIVNIEVKDNQVIVTRKGDDKEEKAMHGTTRAIIANMVKGVTEGFEKALEIVGIGYRAAKQGKKLVLNVGYSHPVEIEEKPGIEIIVEGNNKIIVRGIDKEKVGQVAANIRRVREPDAYQGKGIRYAGEVVRLKEGKTGKK.

It belongs to the universal ribosomal protein uL6 family. In terms of assembly, part of the 50S ribosomal subunit.

This protein binds to the 23S rRNA, and is important in its secondary structure. It is located near the subunit interface in the base of the L7/L12 stalk, and near the tRNA binding site of the peptidyltransferase center. This is Large ribosomal subunit protein uL6 from Thermoanaerobacter sp. (strain X514).